We begin with the raw amino-acid sequence, 142 residues long: Large-conductance mechanosensitive channel (142 aa).

The next 2 membrane-spanning stretches (helical) occupy residues 10-30 and 86-106; these read FAIK…AAFS and GNFI…FLMV.

This sequence belongs to the MscL family. As to quaternary structure, homopentamer.

It localises to the cell inner membrane. Its function is as follows. Channel that opens in response to stretch forces in the membrane lipid bilayer. May participate in the regulation of osmotic pressure changes within the cell. The protein is Large-conductance mechanosensitive channel of Polaromonas naphthalenivorans (strain CJ2).